The following is a 497-amino-acid chain: Angiopoietin-1 (497 aa).

An N-terminal signal peptide occupies residues 1-19; the sequence is MTVFLSFAFLAAILTHIGC. N-linked (GlcNAc...) asparagine glycans are attached at residues Asn-92, Asn-122, Asn-154, Asn-243, and Asn-294. Residues 158–256 adopt a coiled-coil conformation; the sequence is RLEIQLLENS…LQKQQLELMD (99 aa). Positions 276–496 constitute a Fibrinogen C-terminal domain; the sequence is KEEEKPFRDC…STTMMIRPLD (221 aa). 2 cysteine pairs are disulfide-bonded: Cys-285–Cys-314 and Cys-438–Cys-451.

As to quaternary structure, homooligomer. Interacts with TEK/TIE2. Interacts with SVEP1/polydom. Interacts with THBD; this interaction significantly inhibits the generation of activated PC and TAFIa/CPB2 by the thrombin/thrombomodulin complex.

It localises to the secreted. In terms of biological role, binds and activates TIE2 receptor by inducing its tyrosine phosphorylation. Implicated in endothelial developmental processes later and distinct from that of VEGF. Appears to play a crucial role in mediating reciprocal interactions between the endothelium and surrounding matrix and mesenchyme. Mediates blood vessel maturation/stability. It may play an important role in the heart early development. The protein is Angiopoietin-1 (ANGPT1) of Canis lupus familiaris (Dog).